We begin with the raw amino-acid sequence, 707 residues long: Nucleolin (707 aa).

Residues 1–308 form a disordered region; it reads MVKLAKAGKT…KVEGSEPTTP (308 aa). K9, K15, and K16 each carry N6-acetyllysine. The span at 24–46 shows a compositional bias: acidic residues; sequence VEEDSEDEEMSEDEDDSSGEEEV. 4 positions are modified to phosphoserine: S28, S34, S40, and S41. A compositionally biased stretch (low complexity) spans 56-92; the sequence is ATTTPAKKVVVSQTKKAAVPTPAKKAAVTPGKKAVAT. The stretch at 58–65 is repeat 1; it reads TTPAKKVV. Residues 58 to 135 are 8 X 8 AA tandem repeats of X-T-P-X-K-K-X-X; it reads TTPAKKVVVS…GAATPAKGAK (78 aa). A Phosphoserine modification is found at S67. Phosphothreonine is present on residues T69, T76, T84, and T92. A run of 3 repeats spans residues 75–82, 83–90, and 91–98. Position 96 is an N6-acetyllysine (K96). T99 carries the phosphothreonine modification. A 5; truncated repeat occupies 99-104; it reads TPAKVI. At K102 the chain carries N6-acetyllysine. Residues 105–112 form repeat 6; sequence PTPGKKGA. T106 carries the post-translational modification Phosphothreonine. Residues K109 and K116 each carry the N6-acetyllysine modification. 2 tandem repeats follow at residues 120–127 and 128–135. T121 carries the phosphothreonine modification. Over residues 121–137 the composition is skewed to low complexity; sequence TPGKKGAATPAKGAKNG. At K124 the chain carries N6-acetyllysine. Residues S145 and S157 each carry the phosphoserine modification. Acidic residues predominate over residues 145–170; it reads SDEDEDEEDEDDSDEDEDDEEEDEFE. Low complexity predominate over residues 179-188; it reads PAKAAPAAPA. 2 positions are modified to phosphoserine: S189 and S212. Residues 189 to 217 are compositionally biased toward acidic residues; the sequence is SEDEEDDEDEDDEEDDDEEEEDDSEEEVM. Position 220 is a phosphothreonine (T220). Over residues 241–273 the composition is skewed to acidic residues; it reads EEEDDEEEDEDDEDEDDEEEDDEDDDEEEEEEE. Positions 286-302 are enriched in basic and acidic residues; the sequence is MTKQKEAPEAKKQKVEG. A Glycyl lysine isopeptide (Lys-Gly) (interchain with G-Cter in SUMO1); alternate cross-link involves residue K299. Residue K299 forms a Glycyl lysine isopeptide (Lys-Gly) (interchain with G-Cter in SUMO2); alternate linkage. S303 carries the phosphoserine modification. RRM domains lie at 309–385 and 395–468; these read FNLF…KPKG and RTLL…YTGE. K320 bears the N6-acetyllysine mark. Residue K326 forms a Glycyl lysine isopeptide (Lys-Gly) (interchain with G-Cter in SUMO1); alternate linkage. Residue K326 forms a Glycyl lysine isopeptide (Lys-Gly) (interchain with G-Cter in SUMO2); alternate linkage. Position 350 is an N6-acetyllysine (K350). At S358 the chain carries Phosphoserine. Position 369 is a phosphothreonine (T369). A Glycyl lysine isopeptide (Lys-Gly) (interchain with G-Cter in SUMO2) cross-link involves residue K372. K379 participates in a covalent cross-link: Glycyl lysine isopeptide (Lys-Gly) (interchain with G-Cter in SUMO2); alternate. K379 is modified (N6-acetyllysine; alternate). An N6-acetyllysine modification is found at K400. S403 carries the phosphoserine modification. Phosphothreonine is present on T407. N6-acetyllysine occurs at positions 429 and 446. Phosphoserine occurs at positions 460 and 462. K469 and K478 each carry N6-acetyllysine. 2 RRM domains span residues 487–561 and 569–644; these read KTLV…LQGS and KTLF…WAKP. K514 participates in a covalent cross-link: Glycyl lysine isopeptide (Lys-Gly) (interchain with G-Cter in SUMO2); alternate. Residue K514 is modified to N6-acetyllysine; alternate. Residues K522 and K569 each carry the N6-acetyllysine modification. K574 is covalently cross-linked (Glycyl lysine isopeptide (Lys-Gly) (interchain with G-Cter in SUMO2); alternate). K574 bears the N6-acetyllysine; alternate mark. S577 carries the phosphoserine modification. K586 is covalently cross-linked (Glycyl lysine isopeptide (Lys-Gly) (interchain with G-Cter in SUMO1); alternate). A Glycyl lysine isopeptide (Lys-Gly) (interchain with G-Cter in SUMO2); alternate cross-link involves residue K586. S588 and S616 each carry phosphoserine. K621 participates in a covalent cross-link: Glycyl lysine isopeptide (Lys-Gly) (interchain with G-Cter in SUMO2). The tract at residues 639–707 is disordered; that stretch reads LDWAKPKGEG…KPQGKKTKFE (69 aa). An N6-acetyllysine modification is found at K643. Positions 647-696 are enriched in gly residues; the sequence is EGGFGGRGGGRGGFGGRGGGRGGRGGFGGRGRGGFGGRGGFRGGRGGGGD. Asymmetric dimethylarginine is present on residues R653, R657, R663, R667, R670, R676, R678, R684, and R688. R691 bears the Asymmetric dimethylarginine; alternate mark. R691 carries the post-translational modification Omega-N-methylarginine; alternate.

Identified in a IGF2BP1-dependent mRNP granule complex containing untranslated mRNAs. Component of the SWAP complex that consists of NPM1, NCL/nucleolin, PARP1 and SWAP70. Component of a complex which is at least composed of HTATSF1/Tat-SF1, the P-TEFb complex components CDK9 and CCNT1, RNA polymerase II, SUPT5H, and NCL/nucleolin. Interacts with AICDA. Interacts with APTX. Interacts with C1QBP. Interacts with ERBB4. Interacts (via C-terminus) with FMR1 isoform 6 (via N-terminus). Interacts with GZF1; this interaction is important for nucleolar localization of GZF1. Interacts with NSUN2. Interacts with NVL. Interacts (via N-terminus domain) with SETX. Interacts (via RRM1 and C-terminal RRM4/Arg/Gly-rich domains) with TERT; the interaction is important for nucleolar localization of TERT. Interacts with WDR46. Interacts with ZFP36. Interacts with LRRC34. Interacts with RRP1B. Interacts with HNRNPU; this interaction occurs during mitosis. Interacts with RIOK1; RIOK1 recruits NCL to PRMT5 for symmetrically methylation. Interacts with ZBTB7B. Interacts with MDK; this interaction promotes NCL clustering and lateral movements of this complex into lipid rafts leading to MDK internalization. Interacts with HDGF. Interacts with ALKBH2. Interacts with IGFBP5; this interaction is necessary for IGFBP5 localization to the nucleus. Interacts with DDX24 (when ubiquitinated); this interaction may be important during ribosome biogenesis. Some glutamate residues are glycylated by TTLL8. This modification occurs exclusively on glutamate residues and results in a glycine chain on the gamma-carboxyl group. Post-translationally, symmetrically methylated by PRMT5. In terms of tissue distribution, expressed in B-cells that have been induced to switch to various Ig isotypes.

It is found in the nucleus. It localises to the nucleolus. The protein resides in the cytoplasm. Functionally, nucleolin is the major nucleolar protein of growing eukaryotic cells. It is found associated with intranucleolar chromatin and pre-ribosomal particles. It induces chromatin decondensation by binding to histone H1. It is thought to play a role in pre-rRNA transcription and ribosome assembly. May play a role in the process of transcriptional elongation. Binds RNA oligonucleotides with 5'-UUAGGG-3' repeats more tightly than the telomeric single-stranded DNA 5'-TTAGGG-3' repeats. The protein is Nucleolin (Ncl) of Mus musculus (Mouse).